The chain runs to 300 residues: Protein N-terminal and lysine N-methyltransferase EFM7 (300 aa).

Residues Trp75, 101 to 103 (GAG), Asp123, Trp156, and Ser179 contribute to the S-adenosyl-L-methionine site.

Belongs to the class I-like SAM-binding methyltransferase superfamily. EFM7 family.

The protein localises to the cytoplasm. Its function is as follows. S-adenosyl-L-methionine-dependent protein methyltransferase that trimethylates the N-terminal glycine 'Gly-2' of elongation factor 1-alpha, before also catalyzing the mono- and dimethylation of 'Lys-3'. This is Protein N-terminal and lysine N-methyltransferase EFM7 from Cryptococcus neoformans var. neoformans serotype D (strain JEC21 / ATCC MYA-565) (Filobasidiella neoformans).